The chain runs to 440 residues: Ferredoxin--NADP reductase (440 aa).

A CpcD-like domain is found at 17 to 75; that stretch reads SRVFVYEVVGMRQNEETDQTNYPIRKSGSVFIRVPYNRMNQEMQRITRLGGKIVSIQTV. Residues 98–142 form a disordered region; that stretch reads AKSEGNGKATPVKTDSGAKGFAKPPAEEQLKKKDNKGNTMTQAKA. Residues 122-133 are compositionally biased toward basic and acidic residues; sequence PAEEQLKKKDNK. The region spanning 155–279 is the FAD-binding FR-type domain; that stretch reads NAPFIGKVIS…TGPVGKEMLL (125 aa). Residues 214-217, 235-237, Tyr-241, 253-255, and Thr-294 each bind FAD; these read RLYS, CVR, and VCS. Positions 217 and 237 each coordinate NADP(+). Residues Thr-294, 330–331, 360–361, 370–374, 399–400, and Glu-438 contribute to the NADP(+) site; these read VP, SR, RMYIQ, and GL.

Belongs to the ferredoxin--NADP reductase type 1 family. It depends on FAD as a cofactor.

The protein resides in the cellular thylakoid membrane. The enzyme catalyses 2 reduced [2Fe-2S]-[ferredoxin] + NADP(+) + H(+) = 2 oxidized [2Fe-2S]-[ferredoxin] + NADPH. This is Ferredoxin--NADP reductase (petH) from Nostoc sp. (strain PCC 7120 / SAG 25.82 / UTEX 2576).